The sequence spans 298 residues: ATP synthase gamma chain (298 aa).

It belongs to the ATPase gamma chain family. F-type ATPases have 2 components, CF(1) - the catalytic core - and CF(0) - the membrane proton channel. CF(1) has five subunits: alpha(3), beta(3), gamma(1), delta(1), epsilon(1). CF(0) has three main subunits: a, b and c.

It localises to the cell membrane. Functionally, produces ATP from ADP in the presence of a proton gradient across the membrane. The gamma chain is believed to be important in regulating ATPase activity and the flow of protons through the CF(0) complex. In Mycobacterium leprae (strain Br4923), this protein is ATP synthase gamma chain.